A 339-amino-acid polypeptide reads, in one-letter code: MKEKLKELQELALSKIEAVKTSSELEEIRVKFLGKKGELTTILRGMGNLSPEERPIVGKLVNEAKAAVEEKLESVLKAIKDKEKAEKLAGETIDISLPGRKKVIGKRHPLDLTLQSMEEIFVSMGFTIEDGPEVEYDHYNFEALNIPKDHPARSEQDTLYINDNIVLRTQTSPIQVRTMENQKPPIKMISPGKVYRSDSVDATHSPIFYQMEGLVIDKGVTFADLKGTLELFAKKMFGDKVQTKFRPHHFPFTEPSAEMDATCFVCGGEGCRVCKGSGWIELLGCGMVHPNVLRNCGLDPEVYSGFAFGFGVDRMVMLKYGIDDIRLLYESDMRFLNQF.

E254 contacts Mg(2+).

The protein belongs to the class-II aminoacyl-tRNA synthetase family. Phe-tRNA synthetase alpha subunit type 1 subfamily. Tetramer of two alpha and two beta subunits. Requires Mg(2+) as cofactor.

The protein localises to the cytoplasm. It carries out the reaction tRNA(Phe) + L-phenylalanine + ATP = L-phenylalanyl-tRNA(Phe) + AMP + diphosphate + H(+). In Clostridium beijerinckii (strain ATCC 51743 / NCIMB 8052) (Clostridium acetobutylicum), this protein is Phenylalanine--tRNA ligase alpha subunit.